Here is a 281-residue protein sequence, read N- to C-terminus: Trypsin zeta (281 aa).

A signal peptide spans 1 to 23; it reads MSSSSWLGCLLAVLLSALALSQG. Residues 24-39 constitute a propeptide, activation peptide; sequence LPLLEDLDENSFPDGR. Residues 40–279 enclose the Peptidase S1 domain; the sequence is IVGGYVTDIA…LRPWIDAVRA (240 aa). A disulfide bond links C73 and C89. Catalysis depends on charge relay system residues H88 and D135. Cystine bridges form between C199-C219 and C231-C255. The active-site Charge relay system is the S235.

The protein belongs to the peptidase S1 family.

The protein resides in the secreted. It is found in the extracellular space. It catalyses the reaction Preferential cleavage: Arg-|-Xaa, Lys-|-Xaa.. The sequence is that of Trypsin zeta (zetaTry) from Drosophila erecta (Fruit fly).